We begin with the raw amino-acid sequence, 128 residues long: Z-ring associated protein G (128 aa).

Residues Glu7–Met27 form a helical membrane-spanning segment. Residues Gln37–Asp75 adopt a coiled-coil conformation. The interval Asn105–Ser128 is disordered. A compositionally biased stretch (basic and acidic residues) spans Ala107–Ser119.

It belongs to the ZapG family. Homotetramer. In solution, is primarily monomeric but forms small amounts of stable tetramer and hexadecamer. The crystal structure of the cytosolic region shows a coiled-coil tetramer in the asymmetric unit that is very likely to be a physiologically relevant assembly of the protein.

The protein resides in the cell inner membrane. Its function is as follows. Involved in cell division, cell envelope biogenesis and cell shape maintenance. This chain is Z-ring associated protein G, found in Haemophilus ducreyi (strain 35000HP / ATCC 700724).